Consider the following 156-residue polypeptide: Transcription elongation factor GreA (156 aa).

Positions 2 to 78 (AKEIILTQEG…MISKAKLIED (77 aa)) form a coiled coil.

It belongs to the GreA/GreB family.

Functionally, necessary for efficient RNA polymerase transcription elongation past template-encoded arresting sites. The arresting sites in DNA have the property of trapping a certain fraction of elongating RNA polymerases that pass through, resulting in locked ternary complexes. Cleavage of the nascent transcript by cleavage factors such as GreA or GreB allows the resumption of elongation from the new 3'terminus. GreA releases sequences of 2 to 3 nucleotides. In Mesoplasma florum (strain ATCC 33453 / NBRC 100688 / NCTC 11704 / L1) (Acholeplasma florum), this protein is Transcription elongation factor GreA.